The primary structure comprises 161 residues: Peptidyl-prolyl cis-trans isomerase-like 3 (161 aa).

An N-acetylserine modification is found at Ser-2. The PPIase cyclophilin-type domain maps to 2–154 (SVTLHTDVGD…NDVHIKDITI (153 aa)). Arg-61 is subject to Omega-N-methylarginine.

Belongs to the cyclophilin-type PPIase family. PPIL3 subfamily. Identified in the spliceosome C complex. In terms of tissue distribution, ubiquitous. Detected at low levels.

It carries out the reaction [protein]-peptidylproline (omega=180) = [protein]-peptidylproline (omega=0). In terms of biological role, PPIases accelerate the folding of proteins. It catalyzes the cis-trans isomerization of proline imidic peptide bonds in oligopeptides. May be involved in pre-mRNA splicing. The protein is Peptidyl-prolyl cis-trans isomerase-like 3 (PPIL3) of Homo sapiens (Human).